Reading from the N-terminus, the 403-residue chain is Phosphopentomutase (403 aa).

Positions 13, 298, 303, 339, 340, and 351 each coordinate Mn(2+).

The protein belongs to the phosphopentomutase family. The cofactor is Mn(2+).

It localises to the cytoplasm. It carries out the reaction 2-deoxy-alpha-D-ribose 1-phosphate = 2-deoxy-D-ribose 5-phosphate. The enzyme catalyses alpha-D-ribose 1-phosphate = D-ribose 5-phosphate. Its pathway is carbohydrate degradation; 2-deoxy-D-ribose 1-phosphate degradation; D-glyceraldehyde 3-phosphate and acetaldehyde from 2-deoxy-alpha-D-ribose 1-phosphate: step 1/2. Its function is as follows. Isomerase that catalyzes the conversion of deoxy-ribose 1-phosphate (dRib-1-P) and ribose 1-phosphate (Rib-1-P) to deoxy-ribose 5-phosphate (dRib-5-P) and ribose 5-phosphate (Rib-5-P), respectively. This Streptococcus pyogenes serotype M2 (strain MGAS10270) protein is Phosphopentomutase.